Here is a 122-residue protein sequence, read N- to C-terminus: Large ribosomal subunit protein uL14 (122 aa).

It belongs to the universal ribosomal protein uL14 family. As to quaternary structure, part of the 50S ribosomal subunit. Forms a cluster with proteins L3 and L19. In the 70S ribosome, L14 and L19 interact and together make contacts with the 16S rRNA in bridges B5 and B8.

In terms of biological role, binds to 23S rRNA. Forms part of two intersubunit bridges in the 70S ribosome. The chain is Large ribosomal subunit protein uL14 from Mycolicibacterium gilvum (strain PYR-GCK) (Mycobacterium gilvum (strain PYR-GCK)).